Reading from the N-terminus, the 167-residue chain is Signal peptidase complex catalytic subunit SEC11 (167 aa).

The Cytoplasmic portion of the chain corresponds to 1 to 9 (MNLRFELQK). Residues 10–30 (LLNVCFLFASAYMFWQGLAIA) form a helical; Signal-anchor for type II membrane protein membrane-spanning segment. Residues 31–167 (TNSASPIVVV…LGLSALLGGE (137 aa)) are Lumenal-facing. Residues S44, H83, and D109 each act as charge relay system in the active site. Residue N121 is glycosylated (N-linked (GlcNAc...) asparagine). Residues 153–164 (ALLGMLGLSALL) are C-terminal short (CTS) helix.

The protein belongs to the peptidase S26B family. In terms of assembly, component of the signal peptidase complex (SPC) composed of a catalytic subunit SEC11 and three accessory subunits SPC1, SPC2 and SPC3. The complex induces a local thinning of the ER membrane which is used to measure the length of the signal peptide (SP) h-region of protein substrates. This ensures the selectivity of the complex towards h-regions shorter than 18-20 amino acids. SPC associates with the translocon complex.

The protein localises to the endoplasmic reticulum membrane. It carries out the reaction Cleavage of hydrophobic, N-terminal signal or leader sequences from secreted and periplasmic proteins.. Its function is as follows. Catalytic component of the signal peptidase complex (SPC) which catalyzes the cleavage of N-terminal signal sequences from nascent proteins as they are translocated into the lumen of the endoplasmic reticulum. Specifically cleaves N-terminal signal peptides that contain a hydrophobic alpha-helix (h-region) shorter than 18-20 amino acids. The protein is Signal peptidase complex catalytic subunit SEC11 (SEC11) of Saccharomyces cerevisiae (strain Lalvin QA23) (Baker's yeast).